Consider the following 212-residue polypeptide: Ribosomal RNA small subunit methyltransferase G (212 aa).

S-adenosyl-L-methionine-binding positions include Gly73, Phe78, Glu96–Ser98, Val124–Glu125, and Arg141.

This sequence belongs to the methyltransferase superfamily. RNA methyltransferase RsmG family.

The protein localises to the cytoplasm. Its function is as follows. Specifically methylates the N7 position of a guanine in 16S rRNA. The polypeptide is Ribosomal RNA small subunit methyltransferase G (Aster yellows witches'-broom phytoplasma (strain AYWB)).